The chain runs to 338 residues: Glutamyl-tRNA reductase (338 aa).

Substrate is bound by residues 50–53 (TCHR), S102, 107–109 (ETE), and Q113. The active-site Nucleophile is the C51. Residue 181–186 (GYSDIN) coordinates NADP(+).

The protein belongs to the glutamyl-tRNA reductase family. In terms of assembly, homodimer.

It carries out the reaction (S)-4-amino-5-oxopentanoate + tRNA(Glu) + NADP(+) = L-glutamyl-tRNA(Glu) + NADPH + H(+). It functions in the pathway porphyrin-containing compound metabolism; protoporphyrin-IX biosynthesis; 5-aminolevulinate from L-glutamyl-tRNA(Glu): step 1/2. Catalyzes the NADPH-dependent reduction of glutamyl-tRNA(Glu) to glutamate 1-semialdehyde (GSA). The chain is Glutamyl-tRNA reductase from Chlamydia caviae (strain ATCC VR-813 / DSM 19441 / 03DC25 / GPIC) (Chlamydophila caviae).